The chain runs to 536 residues: MTTTPTSSGRRSISSIRRTSSASKKPVLQSEESESGSGSINENTSKPDSPLAQPVSDGERTVKKLRLSKALTINEGTTVFDACRRMAARRVDAVLLTDSSALLSGIVTDKDIATRVIAEGLRPEHTLVSKVMTRNPIFVTSDSLAIEALQKMVQGKFRHLPVVENGEVIALLDITKCLYDAISRMEKAAEQGSALATAVEERHWGSGNFAFIDTLRERMFKPALSTIVTENTKVALVSASDPVFVASKKMRDLRVNSVIIAVGNKIHGILTSKDILMRVVAQNLSPELTLVEKVMTPNPECASIETTILDALHIMHDGKFLHLPVFDKDGFAVACLDVLQITHAAISTVENNSSGAVNDMANTMMQKFWDSALALEPPEDYETHSDMSAMLINSEGKQSCPSQGLVSSFAFKFEDRKGRVQRFNSTGESFEELMSVVMQRCEADSGLQIMYQDDEGDKVLISRDSDLVAAVTFARSLGQKVLRLHLDFTETIAPLETIADLSEGNGGCVWWQTGVLAGAIVLTSIGLFVYLKRSKK.

Residues 1–23 (MTTTPTSSGRRSISSIRRTSSAS) are compositionally biased toward low complexity. Residues 1–60 (MTTTPTSSGRRSISSIRRTSSASKKPVLQSEESESGSGSINENTSKPDSPLAQPVSDGER) are disordered. 4 CBS domains span residues 66 to 124 (RLSK…LRPE), 132 to 187 (MTRN…RMEK), 228 to 287 (VTEN…LSPE), and 295 to 354 (MTPN…NNSS). The PB1 domain occupies 406 to 489 (VSSFAFKFED…KVLRLHLDFT (84 aa)). A helical membrane pass occupies residues 509-529 (VWWQTGVLAGAIVLTSIGLFV).

It is found in the membrane. This chain is CBS domain-containing protein CBSCBSPB2 (CBSCBSPB2), found in Arabidopsis thaliana (Mouse-ear cress).